A 255-amino-acid chain; its full sequence is MSDYIVVKCGGSMLDQLNDLFFDCIKKLQQKYKVVIVHGGGPEIDAQLKDCNINAEKRDGLRVTPKEVMDVVQMVLCGSTNKKLVMNLQKHNLRAVGCSGCDGNLLQVQPVSEEIGYVGEVRYVETALLKGLINMNYIPVIAPVGINDNEIYNINADTAAAGIAAALSAKELIFITDVDGVLHEGKLVKKTDEFEIVNFIENGVITGGMIPKVQAALASLKMGVQKVSIVNGTKDFTEVTGECIGTTVTRGVSIA.

Substrate is bound by residues 40–41 (GG), R62, and N153.

The protein belongs to the acetylglutamate kinase family. ArgB subfamily.

Its subcellular location is the cytoplasm. The catalysed reaction is N-acetyl-L-glutamate + ATP = N-acetyl-L-glutamyl 5-phosphate + ADP. It functions in the pathway amino-acid biosynthesis; L-arginine biosynthesis; N(2)-acetyl-L-ornithine from L-glutamate: step 2/4. Its function is as follows. Catalyzes the ATP-dependent phosphorylation of N-acetyl-L-glutamate. The polypeptide is Acetylglutamate kinase (Bacillus cereus (strain AH187)).